The primary structure comprises 119 residues: Large ribosomal subunit protein uL18 (119 aa).

This sequence belongs to the universal ribosomal protein uL18 family. Part of the 50S ribosomal subunit; part of the 5S rRNA/L5/L18/L25 subcomplex. Contacts the 5S and 23S rRNAs.

This is one of the proteins that bind and probably mediate the attachment of the 5S RNA into the large ribosomal subunit, where it forms part of the central protuberance. This chain is Large ribosomal subunit protein uL18, found in Paracoccus denitrificans (strain Pd 1222).